We begin with the raw amino-acid sequence, 158 residues long: 2-C-methyl-D-erythritol 2,4-cyclodiphosphate synthase (158 aa).

2 residues coordinate a divalent metal cation: Asp-9 and His-11. Residues 9–11 (DVH) and 35–36 (HS) each bind 4-CDP-2-C-methyl-D-erythritol 2-phosphate. His-43 provides a ligand contact to a divalent metal cation. 4-CDP-2-C-methyl-D-erythritol 2-phosphate is bound by residues 57-59 (DIG), 62-66 (FPDTD), 101-107 (AQRPKMA), 133-136 (TTTE), Phe-140, and Arg-143.

The protein belongs to the IspF family. Homotrimer. A divalent metal cation is required as a cofactor.

It catalyses the reaction 4-CDP-2-C-methyl-D-erythritol 2-phosphate = 2-C-methyl-D-erythritol 2,4-cyclic diphosphate + CMP. Its pathway is isoprenoid biosynthesis; isopentenyl diphosphate biosynthesis via DXP pathway; isopentenyl diphosphate from 1-deoxy-D-xylulose 5-phosphate: step 4/6. Functionally, involved in the biosynthesis of isopentenyl diphosphate (IPP) and dimethylallyl diphosphate (DMAPP), two major building blocks of isoprenoid compounds. Catalyzes the conversion of 4-diphosphocytidyl-2-C-methyl-D-erythritol 2-phosphate (CDP-ME2P) to 2-C-methyl-D-erythritol 2,4-cyclodiphosphate (ME-CPP) with a corresponding release of cytidine 5-monophosphate (CMP). The chain is 2-C-methyl-D-erythritol 2,4-cyclodiphosphate synthase from Lysinibacillus sphaericus (strain C3-41).